The chain runs to 273 residues: Gap junction beta-5 protein (273 aa).

The Cytoplasmic segment spans residues 1–20 (MNWSIFEGLLSGVNKYSTAF). Residues 21–40 (GRIWLSLVFIFRVLVYLVTA) form a helical membrane-spanning segment. At 41 to 75 (ERVWSDDHKDFDCNTRQPGCSNVCFDEFFPVSHVR) the chain is on the extracellular side. The helical transmembrane segment at 76-98 (LWALQLILVTCPSLLVVMHVAYR) threads the bilayer. The Cytoplasmic segment spans residues 99 to 126 (EVQEKRHREAHGENSGRLYLNPGKKRGG). The helical transmembrane segment at 127-149 (LWWTYVCSLVFKASVDIAFLYVF) threads the bilayer. Over 150 to 187 (HSFYPKYILPPVVKCHADPCPNIVDCFISKPSEKNIFT) the chain is Extracellular. A helical membrane pass occupies residues 188 to 210 (LFMVATAAICILLNLVELIYLVS). At 211-273 (KRCHECLAAR…PRDHVKKTIL (63 aa)) the chain is on the cytoplasmic side.

This sequence belongs to the connexin family. Beta-type (group I) subfamily. In terms of assembly, a connexon is composed of a hexamer of connexins.

It is found in the cell membrane. Its subcellular location is the cell junction. The protein resides in the gap junction. Its function is as follows. One gap junction consists of a cluster of closely packed pairs of transmembrane channels, the connexons, through which materials of low MW diffuse from one cell to a neighboring cell. In Homo sapiens (Human), this protein is Gap junction beta-5 protein (GJB5).